The primary structure comprises 287 residues: MHRASHHELRAMFRALLDSSRCYHTASVFDPMSARIAADLGFECGILGGSVASLQVLAAPDFALITLSEFVEQATRIGRVARLPVIADADHGYGNALNVMRTVVELERAGIAALTIEDTLLPAQFGRKSTDLICVEEGVGKIRAALEARVDPALTIIARTNAELIDVDAVIQRTLAYQEAGADGICLVGVRDFAHLEAIAEHLHIPLMLVTYGNPQLRDDARLARLGVRVVVNGHAAYFAAIKATYDCLREERGAVASDLTASELSKKYTFPEEYQAWARDYMEVKE.

Position 50 (Ser-50) interacts with substrate. Residue Asp-88 coordinates Mg(2+). The substrate site is built by Arg-159 and His-235.

It belongs to the isocitrate lyase family. Oxaloacetate decarboxylase subfamily. Homotetramer; dimer of dimers. Mg(2+) is required as a cofactor.

It catalyses the reaction oxaloacetate + H(+) = pyruvate + CO2. Its function is as follows. Catalyzes the decarboxylation of oxaloacetate into pyruvate. Seems to play a role in maintaining cellular concentrations of bicarbonate and pyruvate. The protein is Oxaloacetate decarboxylase of Pseudomonas aeruginosa (strain LESB58).